Here is a 216-residue protein sequence, read N- to C-terminus: Nicotinamidase (216 aa).

Asp8 is a catalytic residue. Residues Asp51, His53, and His94 each contribute to the Zn(2+) site. Lys122 is an active-site residue. Residue Cys167 is the Nucleophile of the active site.

Belongs to the isochorismatase family.

It localises to the cytoplasm. It is found in the nucleus. The protein localises to the peroxisome. It catalyses the reaction nicotinamide + H2O = nicotinate + NH4(+). It functions in the pathway cofactor biosynthesis; nicotinate biosynthesis; nicotinate from nicotinamide: step 1/1. Inhibited by N-ethylmaleimide, HgCl(2) and PCMB. Competitively inhibited by NAD, NMN and 3-acetylpyridine. Functionally, catalyzes the deamidation of nicotinamide, an early step in the NAD(+) salvage pathway. Positively regulates SIR2-mediated silencing and longevity by preventing the accumulation of intracellular nicotinamide, an inhibitor of SIR2, during times of stress. Also acts on nicotinyl hydroxamate. The protein is Nicotinamidase (PNC1) of Saccharomyces cerevisiae (strain ATCC 204508 / S288c) (Baker's yeast).